The sequence spans 263 residues: uncharacterized protein (263 aa).

This sequence belongs to the flavoredoxin family. Requires FMN as cofactor.

This is an uncharacterized protein from Aeropyrum pernix (strain ATCC 700893 / DSM 11879 / JCM 9820 / NBRC 100138 / K1).